We begin with the raw amino-acid sequence, 87 residues long: uncharacterized protein (87 aa).

The segment at 52-87 is disordered; sequence KWQPRPDANNSDTTTSTEDSTTDTETEYSTTEDELA. Acidic residues predominate over residues 71-87; sequence STTDTETEYSTTEDELA.

This is an uncharacterized protein from Autographa californica nuclear polyhedrosis virus (AcMNPV).